Consider the following 172-residue polypeptide: Nicotinamide-nucleotide adenylyltransferase (172 aa).

It belongs to the archaeal NMN adenylyltransferase family.

The protein localises to the cytoplasm. It catalyses the reaction beta-nicotinamide D-ribonucleotide + ATP + H(+) = diphosphate + NAD(+). It functions in the pathway cofactor biosynthesis; NAD(+) biosynthesis; NAD(+) from nicotinamide D-ribonucleotide: step 1/1. In Sulfurisphaera tokodaii (strain DSM 16993 / JCM 10545 / NBRC 100140 / 7) (Sulfolobus tokodaii), this protein is Nicotinamide-nucleotide adenylyltransferase.